We begin with the raw amino-acid sequence, 99 residues long: Aphid transmission protein (99 aa).

This sequence belongs to the caulimoviridae ORF II family.

In terms of biological role, this protein is involved in virus transmission. This is Aphid transmission protein from Cauliflower mosaic virus (strain W260) (CaMV).